The chain runs to 295 residues: Trimeric intracellular cation channel type 1B.1 (295 aa).

The Lumenal portion of the chain corresponds to 1–27 (MVVPESFQLDQEILLDAGAQLHRLKMY). Residues 28-45 (PYFDVAHYLLMIIEVRDD) traverse the membrane as a helical segment. Residues 46–56 (LGSAASIFSRK) lie on the Cytoplasmic side of the membrane. Residues 57–80 (HPLSCWLSSMLMCFADAFLANFLL) traverse the membrane as a discontinuously helical segment. The Lumenal portion of the chain corresponds to 81 to 89 (GEPVIAPFK). The chain crosses the membrane as a helical span at residues 90 to 107 (RHDDIILATIIWYLVFYA). Topologically, residues 108-119 (PFDGIYKIAKIT) are cytoplasmic. Residues 120 to 148 (PVKCVLAVMKEVKRAYKVSHGVSHAAKLY) traverse the membrane as a helical segment. A 1,2-diacyl-sn-glycero-3-phospho-(1D-myo-inositol-4,5-bisphosphate) contacts are provided by lysine 129 and arginine 133. Residues 149–150 (PN) are Lumenal-facing. A discontinuously helical transmembrane segment spans residues 151-177 (SYIVQVLVGTAKGAGSGIVRTLEQLVR). An a 1,2-diacyl-sn-glycero-3-phospho-(1D-myo-inositol-4,5-bisphosphate)-binding site is contributed by serine 166. Residues 178-188 (GVWLPTHNELL) lie on the Cytoplasmic side of the membrane. Residues 189 to 210 (RPSFATKACVVAASVLALEKSG) form a helical membrane-spanning segment. The Lumenal segment spans residues 211-215 (TYLTA). The chain crosses the membrane as a helical span at residues 216-239 (PHDLVYLVIVGFFVYFKLSAVILH). The Cytoplasmic portion of the chain corresponds to 240–295 (VTDPFAPIENLFCAIFMGGIWDAVSRALAASRDRRAAGAHSNENGSSISTPEKKDQ). A disordered region spans residues 274–295 (RAAGAHSNENGSSISTPEKKDQ).

It belongs to the TMEM38 family. Homotrimer; trimerization probably requires binding to phosphatidylinositol 4,5-bisphosphate (PIP2).

Its subcellular location is the endoplasmic reticulum membrane. Its function is as follows. Potassium channel that mediates transmembrane potassium transport. Might be required for maintenance of rapid intracellular calcium release. May act as a counter-ion channel that functions in synchronization with calcium release from intracellular stores. Binds phosphatidylinositol 4,5-bisphosphate (PIP2). The sequence is that of Trimeric intracellular cation channel type 1B.1 from Caenorhabditis elegans.